A 71-amino-acid chain; its full sequence is Mitotic-spindle organizing protein 1B (71 aa).

The protein belongs to the MOZART1 family. In terms of assembly, homo- and heteromultimer. Part of the gamma-tubulin complex. Interacts with TUBB2/TUBB3, GIP2, GCP3 and TSA1 (via C-terminal domain). Mostly expressed in siliques and flowers, and, to a lower extent, in leaves, roots and seedlings, with highest levels in young tissues and meristematic cells, and the vasculature.

It is found in the cytoplasm. The protein localises to the cytoskeleton. It localises to the microtubule organizing center. The protein resides in the spindle. Its subcellular location is the nucleus. It is found in the phragmoplast. The protein localises to the nucleus envelope. Its function is as follows. Required for gamma-tubulin complex recruitment to the microtubule organizing centers (MTOCs). During mitosis, modulates gamma-tubulin complex localization, spindle stability and chromosomal segregation. Necessary for gametophyte development and embryogenesis. The polypeptide is Mitotic-spindle organizing protein 1B (GIP1) (Arabidopsis thaliana (Mouse-ear cress)).